A 309-amino-acid chain; its full sequence is Porphobilinogen deaminase (309 aa).

Cys242 carries the S-(dipyrrolylmethanemethyl)cysteine modification.

It belongs to the HMBS family. As to quaternary structure, monomer. Dipyrromethane serves as cofactor.

It catalyses the reaction 4 porphobilinogen + H2O = hydroxymethylbilane + 4 NH4(+). It participates in porphyrin-containing compound metabolism; protoporphyrin-IX biosynthesis; coproporphyrinogen-III from 5-aminolevulinate: step 2/4. Tetrapolymerization of the monopyrrole PBG into the hydroxymethylbilane pre-uroporphyrinogen in several discrete steps. This Shewanella woodyi (strain ATCC 51908 / MS32) protein is Porphobilinogen deaminase.